Reading from the N-terminus, the 125-residue chain is uncharacterized protein (125 aa).

The protein localises to the mitochondrion. This is an uncharacterized protein from Paramecium tetraurelia.